A 138-amino-acid chain; its full sequence is Nucleoside diphosphate kinase (138 aa).

6 residues coordinate ATP: Lys-10, Phe-58, Arg-86, Thr-92, Arg-103, and Asn-113. Residue His-116 is the Pros-phosphohistidine intermediate of the active site.

It belongs to the NDK family. In terms of assembly, homotetramer. It depends on Mg(2+) as a cofactor.

The protein resides in the cytoplasm. It catalyses the reaction a 2'-deoxyribonucleoside 5'-diphosphate + ATP = a 2'-deoxyribonucleoside 5'-triphosphate + ADP. The enzyme catalyses a ribonucleoside 5'-diphosphate + ATP = a ribonucleoside 5'-triphosphate + ADP. In terms of biological role, major role in the synthesis of nucleoside triphosphates other than ATP. The ATP gamma phosphate is transferred to the NDP beta phosphate via a ping-pong mechanism, using a phosphorylated active-site intermediate. This Haemophilus ducreyi (strain 35000HP / ATCC 700724) protein is Nucleoside diphosphate kinase.